The chain runs to 308 residues: Ribosomal RNA small subunit methyltransferase H (308 aa).

S-adenosyl-L-methionine is bound by residues 34-36 (GGH), Asp-54, Phe-80, Asp-101, and Gln-108.

This sequence belongs to the methyltransferase superfamily. RsmH family.

The protein resides in the cytoplasm. The enzyme catalyses cytidine(1402) in 16S rRNA + S-adenosyl-L-methionine = N(4)-methylcytidine(1402) in 16S rRNA + S-adenosyl-L-homocysteine + H(+). Functionally, specifically methylates the N4 position of cytidine in position 1402 (C1402) of 16S rRNA. This chain is Ribosomal RNA small subunit methyltransferase H, found in Ureaplasma parvum serovar 3 (strain ATCC 27815 / 27 / NCTC 11736).